A 361-amino-acid chain; its full sequence is Septin-1 (361 aa).

The Septin-type G domain maps to 32–304 (KGFEFTLMVV…ENYRSDRLAK (273 aa)). Residues 42-49 (GESGLGKS) form a G1 motif region. GTP is bound by residues 42-49 (GESGLGKS), Thr-76, Gly-102, 181-189 (KADCLTKKE), Gly-239, and Arg-254. The tract at residues 99-102 (DTPG) is G3 motif. Residues 180 to 183 (AKAD) are G4 motif. Phosphoserine is present on Ser-319.

It belongs to the TRAFAC class TrmE-Era-EngA-EngB-Septin-like GTPase superfamily. Septin GTPase family. In terms of assembly, likely part of a multicomponent septin complex that includes pnut. Interacts with pnut. Interacts with park. Ubiquitinated by park, leading to its degradation by the proteasome. Accumulates at the leading edge of the cleavage furrow in dividing cells and cellularizing embryos (at protein level). Also accumulates at the leading edge of the embryo epithelium during dorsal closure, in the embryonic neurons, and at the baso-lateral surfaces of ovarian follicle cells (at protein level).

Its subcellular location is the cytoplasm. Its function is as follows. Involved in cytokinesis. May be involved in p53-dependent apoptosis. This chain is Septin-1, found in Drosophila melanogaster (Fruit fly).